A 125-amino-acid polypeptide reads, in one-letter code: Small ribosomal subunit protein uS13 (125 aa).

Residues 92–125 (RRSLPVRGQRTRTNARTRKGKRKTVAGKKKAVKK) are disordered.

The protein belongs to the universal ribosomal protein uS13 family. As to quaternary structure, part of the 30S ribosomal subunit. Forms a loose heterodimer with protein S19. Forms two bridges to the 50S subunit in the 70S ribosome.

In terms of biological role, located at the top of the head of the 30S subunit, it contacts several helices of the 16S rRNA. In the 70S ribosome it contacts the 23S rRNA (bridge B1a) and protein L5 of the 50S subunit (bridge B1b), connecting the 2 subunits; these bridges are implicated in subunit movement. Contacts the tRNAs in the A and P-sites. The chain is Small ribosomal subunit protein uS13 from Pelodictyon phaeoclathratiforme (strain DSM 5477 / BU-1).